A 200-amino-acid chain; its full sequence is dITP/XTP pyrophosphatase (200 aa).

8 to 13 (THNPNK) is a substrate binding site. Mg(2+) is bound by residues Glu41 and Asp71. The Proton acceptor role is filled by Asp71. Substrate is bound by residues Thr72, 153-156 (FGYD), Lys176, and 181-182 (HR).

It belongs to the HAM1 NTPase family. As to quaternary structure, homodimer. Requires Mg(2+) as cofactor.

It catalyses the reaction XTP + H2O = XMP + diphosphate + H(+). The catalysed reaction is dITP + H2O = dIMP + diphosphate + H(+). It carries out the reaction ITP + H2O = IMP + diphosphate + H(+). Its function is as follows. Pyrophosphatase that catalyzes the hydrolysis of nucleoside triphosphates to their monophosphate derivatives, with a high preference for the non-canonical purine nucleotides XTP (xanthosine triphosphate), dITP (deoxyinosine triphosphate) and ITP. Seems to function as a house-cleaning enzyme that removes non-canonical purine nucleotides from the nucleotide pool, thus preventing their incorporation into DNA/RNA and avoiding chromosomal lesions. The polypeptide is dITP/XTP pyrophosphatase (Caldanaerobacter subterraneus subsp. tengcongensis (strain DSM 15242 / JCM 11007 / NBRC 100824 / MB4) (Thermoanaerobacter tengcongensis)).